Consider the following 337-residue polypeptide: Receptor like protein kinase S.3 (337 aa).

One can recognise a Protein kinase domain in the interval Phe50 to Leu316. ATP contacts are provided by residues Phe56–Val64 and Lys78. At Tyr123 the chain carries Phosphotyrosine. Asp171 functions as the Proton acceptor in the catalytic mechanism.

This sequence belongs to the protein kinase superfamily. Ser/Thr protein kinase family.

It catalyses the reaction L-seryl-[protein] + ATP = O-phospho-L-seryl-[protein] + ADP + H(+). It carries out the reaction L-threonyl-[protein] + ATP = O-phospho-L-threonyl-[protein] + ADP + H(+). This chain is Receptor like protein kinase S.3 (LECRKS3), found in Arabidopsis thaliana (Mouse-ear cress).